The primary structure comprises 89 residues: Small ribosomal subunit protein uS15 (89 aa).

This sequence belongs to the universal ribosomal protein uS15 family. As to quaternary structure, part of the 30S ribosomal subunit. Forms a bridge to the 50S subunit in the 70S ribosome, contacting the 23S rRNA.

Its function is as follows. One of the primary rRNA binding proteins, it binds directly to 16S rRNA where it helps nucleate assembly of the platform of the 30S subunit by binding and bridging several RNA helices of the 16S rRNA. Forms an intersubunit bridge (bridge B4) with the 23S rRNA of the 50S subunit in the ribosome. The sequence is that of Small ribosomal subunit protein uS15 from Latilactobacillus sakei subsp. sakei (strain 23K) (Lactobacillus sakei subsp. sakei).